We begin with the raw amino-acid sequence, 2144 residues long: HEAT repeat-containing protein 1 (2144 aa).

An N-acetylmethionine modification is found at Met1. Thr2 carries the N-acetylthreonine; in HEAT repeat-containing protein 1, N-terminally processed modification. At Ser516 the chain carries Phosphoserine. One copy of the HEAT 1 repeat lies at 913 to 951 (ASISSPVVTSLLINLGSPVKEVRRAAIQCLQALSGVASP). The interval 1170–1191 (KAKPLGTVQQKRRQKMQQKKSQ) is disordered. Phosphoserine is present on Ser1190. One copy of the HEAT 2 repeat lies at 1347-1385 (NKTVKMVIPALIQSDSGDSIEVSRNVEEIVVKIISVFVD). The residue at position 1492 (Ser1492) is a Phosphoserine. 3 HEAT repeats span residues 1594–1632 (LLPTETFIPVIRGLVGNPLPSVRRKALDLLNNKLQQNIS), 1730–1770 (IPQL…VVET), and 2100–2138 (IVLLPESIPFLAELMEDECEEVEHQCQKTIQQLETVLGE).

The protein belongs to the HEATR1/UTP10 family. In terms of assembly, part of the small subunit (SSU) processome, composed of more than 70 proteins and the RNA chaperone small nucleolar RNA (snoRNA) U3. Interacts with MYC; the interaction is required for localization of MYC to the nucleolus.

The protein resides in the nucleus. It localises to the nucleolus. Ribosome biogenesis factor; required for recruitment of Myc to nucleoli. Involved in nucleolar processing of pre-18S ribosomal RNA. Required for optimal pre-ribosomal RNA transcription by RNA polymerase I. Part of the small subunit (SSU) processome, first precursor of the small eukaryotic ribosomal subunit. During the assembly of the SSU processome in the nucleolus, many ribosome biogenesis factors, an RNA chaperone and ribosomal proteins associate with the nascent pre-rRNA and work in concert to generate RNA folding, modifications, rearrangements and cleavage as well as targeted degradation of pre-ribosomal RNA by the RNA exosome. Involved in neuronal-lineage cell proliferation. The polypeptide is HEAT repeat-containing protein 1 (Homo sapiens (Human)).